Reading from the N-terminus, the 335-residue chain is Galactosylgalactosylxylosylprotein 3-beta-glucuronosyltransferase 3 (335 aa).

Residues 1–7 (MKLKLKN) are Cytoplasmic-facing. A helical; Signal-anchor for type II membrane protein membrane pass occupies residues 8–28 (VFLAYFLVSIAGLLYALVQLG). The Lumenal portion of the chain corresponds to 29-335 (QPCDCLPPLR…GRGSDPAIEV (307 aa)). UDP-alpha-D-glucuronate-binding positions include 82–84 (PTY), D113, R156, R161, and 194–196 (DDD). Residue D196 participates in Mn(2+) binding. The segment at 243–252 (WEPSRPFPVD) is interaction with galactose moiety of substrate glycoprotein. Residue E281 is the Proton donor/acceptor of the active site. An N-linked (GlcNAc...) asparagine glycan is attached at N300. 308–310 (HTR) lines the UDP-alpha-D-glucuronate pocket. A compositionally biased stretch (basic and acidic residues) spans 312-322 (EKPKMKQEEQL). Positions 312–335 (EKPKMKQEEQLQRQGRGSDPAIEV) are disordered.

It belongs to the glycosyltransferase 43 family. As to quaternary structure, homodimer; disulfide-linked. Interacts with PXYLP1; the interaction increases the 2-phosphoxylose phosphatase activity of PXYLP1 during completion of linkage region formation in a B3GAT3-mediated manner. Mn(2+) is required as a cofactor. N-glycosylated. In terms of tissue distribution, ubiquitous (but weakly expressed in all tissues examined).

It is found in the golgi apparatus membrane. Its subcellular location is the golgi apparatus. The protein resides in the cis-Golgi network. It carries out the reaction 3-O-(beta-D-galactosyl-(1-&gt;3)-beta-D-galactosyl-(1-&gt;4)-beta-D-xylosyl)-L-seryl-[protein] + UDP-alpha-D-glucuronate = 3-O-(beta-D-GlcA-(1-&gt;3)-beta-D-Gal-(1-&gt;3)-beta-D-Gal-(1-&gt;4)-beta-D-Xyl)-L-seryl-[protein] + UDP + H(+). It functions in the pathway protein modification; protein glycosylation. With respect to regulation, inhibited by EDTA. In terms of biological role, glycosaminoglycans biosynthesis. Involved in forming the linkage tetrasaccharide present in heparan sulfate and chondroitin sulfate. Transfers a glucuronic acid moiety from the uridine diphosphate-glucuronic acid (UDP-GlcUA) to the common linkage region trisaccharide Gal-beta-1,3-Gal-beta-1,4-Xyl covalently bound to a Ser residue at the glycosaminylglycan attachment site of proteoglycans. Can also play a role in the biosynthesis of l2/HNK-1 carbohydrate epitope on glycoproteins. Shows strict specificity for Gal-beta-1,3-Gal-beta-1,4-Xyl, exhibiting negligible incorporation into other galactoside substrates including Galbeta1-3Gal beta1-O-benzyl, Galbeta1-4GlcNAc and Galbeta1-4Glc. Stimulates 2-phosphoxylose phosphatase activity of PXYLP1 in presence of uridine diphosphate-glucuronic acid (UDP-GlcUA) during completion of linkage region formation. The sequence is that of Galactosylgalactosylxylosylprotein 3-beta-glucuronosyltransferase 3 (B3GAT3) from Homo sapiens (Human).